The following is a 929-amino-acid chain: Isoleucine--tRNA ligase (929 aa).

The 'HIGH' region signature appears at 58–68 (PYANGDIHIGH). E563 is a binding site for L-isoleucyl-5'-AMP. Residues 605–609 (KMSKS) carry the 'KMSKS' region motif. Position 608 (K608) interacts with ATP. 4 residues coordinate Zn(2+): C892, C895, C912, and C915.

The protein belongs to the class-I aminoacyl-tRNA synthetase family. IleS type 1 subfamily. As to quaternary structure, monomer. It depends on Zn(2+) as a cofactor.

The protein resides in the cytoplasm. It catalyses the reaction tRNA(Ile) + L-isoleucine + ATP = L-isoleucyl-tRNA(Ile) + AMP + diphosphate. Catalyzes the attachment of isoleucine to tRNA(Ile). As IleRS can inadvertently accommodate and process structurally similar amino acids such as valine, to avoid such errors it has two additional distinct tRNA(Ile)-dependent editing activities. One activity is designated as 'pretransfer' editing and involves the hydrolysis of activated Val-AMP. The other activity is designated 'posttransfer' editing and involves deacylation of mischarged Val-tRNA(Ile). The polypeptide is Isoleucine--tRNA ligase (Neisseria meningitidis serogroup C / serotype 2a (strain ATCC 700532 / DSM 15464 / FAM18)).